Reading from the N-terminus, the 511-residue chain is Lysine--tRNA ligase (511 aa).

E421 and E428 together coordinate Mg(2+).

The protein belongs to the class-II aminoacyl-tRNA synthetase family. In terms of assembly, homodimer. It depends on Mg(2+) as a cofactor.

The protein localises to the cytoplasm. The enzyme catalyses tRNA(Lys) + L-lysine + ATP = L-lysyl-tRNA(Lys) + AMP + diphosphate. The polypeptide is Lysine--tRNA ligase (Aeromonas hydrophila subsp. hydrophila (strain ATCC 7966 / DSM 30187 / BCRC 13018 / CCUG 14551 / JCM 1027 / KCTC 2358 / NCIMB 9240 / NCTC 8049)).